Consider the following 250-residue polypeptide: Probable 2' cyclic ADP-D-ribose synthase TcpB (250 aa).

The segment at 1–46 (MSKEKQAQSKAHKAQQAISSAKSLSTQKSKMSELERATRDGAAIGK) is disordered. Low complexity predominate over residues 14–23 (AQQAISSAKS). Positions 30–39 (KMSELERATR) are enriched in basic and acidic residues. In terms of domain architecture, TIR spans 117-250 (EEYDFFISHA…EIAKELHSLI (134 aa)). Glu-192 is an active-site residue.

Homodimer. Interacts with host TIRAP. Interacts with host TLR4, abolishes the interaction of host TIRAP with TLR4.

It is found in the secreted. It localises to the host cell membrane. The enzyme catalyses NAD(+) + H2O = ADP-D-ribose + nicotinamide + H(+). The catalysed reaction is NAD(+) = 2'cADPR + nicotinamide + H(+). In terms of biological role, virulence factor that interferes with host Toll-like receptor 2 (TLR2) signaling, resulting in the reduction of dendritic cell maturation, inhibition of pro-inflammatory cytokine secretion and impaired NF-kappa-B activation in macrophages. Also acts on host TLR4. Binds host lipids. Has NAD(+) hydrolase (NADase) activity, catalyzes cleavage of NAD(+) into ADP-D-ribose (ADPR) and nicotinamide, also generates a cyclization variant of cyclic ADPR (cADPR), termed v-cADPR (probably 2'cADPR). The sequence is that of Probable 2' cyclic ADP-D-ribose synthase TcpB from Brucella abortus (strain 2308).